The following is a 527-amino-acid chain: Probable malate:quinone oxidoreductase 2 (527 aa).

This sequence belongs to the MQO family. FAD serves as cofactor.

The catalysed reaction is (S)-malate + a quinone = a quinol + oxaloacetate. It participates in carbohydrate metabolism; tricarboxylic acid cycle; oxaloacetate from (S)-malate (quinone route): step 1/1. The sequence is that of Probable malate:quinone oxidoreductase 2 from Pseudomonas putida (strain ATCC 47054 / DSM 6125 / CFBP 8728 / NCIMB 11950 / KT2440).